The following is a 93-amino-acid chain: Large ribosomal subunit protein uL23cz/uL23cy (93 aa).

Belongs to the universal ribosomal protein uL23 family. Part of the 50S ribosomal subunit.

Its subcellular location is the plastid. The protein resides in the chloroplast. In terms of biological role, binds to 23S rRNA. The polypeptide is Large ribosomal subunit protein uL23cz/uL23cy (rpl23-A) (Jasminum nudiflorum (Winter jasmine)).